A 209-amino-acid chain; its full sequence is Large ribosomal subunit protein uL3 (209 aa).

The disordered stretch occupies residues 133 to 152 (THGNSLSHRVPGSIGQNQTP). The residue at position 150 (Q150) is an N5-methylglutamine.

It belongs to the universal ribosomal protein uL3 family. In terms of assembly, part of the 50S ribosomal subunit. Forms a cluster with proteins L14 and L19. Methylated by PrmB.

One of the primary rRNA binding proteins, it binds directly near the 3'-end of the 23S rRNA, where it nucleates assembly of the 50S subunit. In Yersinia enterocolitica serotype O:8 / biotype 1B (strain NCTC 13174 / 8081), this protein is Large ribosomal subunit protein uL3.